The following is a 271-amino-acid chain: Putative pyruvate, phosphate dikinase regulatory protein (271 aa).

147 to 154 (GLSRTSKT) is a binding site for ADP.

The protein belongs to the pyruvate, phosphate/water dikinase regulatory protein family. PDRP subfamily.

The enzyme catalyses N(tele)-phospho-L-histidyl/L-threonyl-[pyruvate, phosphate dikinase] + ADP = N(tele)-phospho-L-histidyl/O-phospho-L-threonyl-[pyruvate, phosphate dikinase] + AMP + H(+). It carries out the reaction N(tele)-phospho-L-histidyl/O-phospho-L-threonyl-[pyruvate, phosphate dikinase] + phosphate + H(+) = N(tele)-phospho-L-histidyl/L-threonyl-[pyruvate, phosphate dikinase] + diphosphate. Functionally, bifunctional serine/threonine kinase and phosphorylase involved in the regulation of the pyruvate, phosphate dikinase (PPDK) by catalyzing its phosphorylation/dephosphorylation. This chain is Putative pyruvate, phosphate dikinase regulatory protein, found in Clostridium tetani (strain Massachusetts / E88).